The chain runs to 274 residues: Large ribosomal subunit protein uL2cz/uL2cy (274 aa).

Residues 225 to 274 (PVDHPHGGGEGRAPIGRKKPVTPWGYPALGRRSRKRKKYSDNLILRRRTK) are disordered.

The protein belongs to the universal ribosomal protein uL2 family. Part of the 50S ribosomal subunit.

It is found in the plastid. The protein localises to the chloroplast. In Lotus japonicus (Lotus corniculatus var. japonicus), this protein is Large ribosomal subunit protein uL2cz/uL2cy (rpl2-A).